Here is a 210-residue protein sequence, read N- to C-terminus: Protein-L-isoaspartate O-methyltransferase (210 aa).

Ser54 is an active-site residue.

It belongs to the methyltransferase superfamily. L-isoaspartyl/D-aspartyl protein methyltransferase family.

The protein resides in the cytoplasm. The enzyme catalyses [protein]-L-isoaspartate + S-adenosyl-L-methionine = [protein]-L-isoaspartate alpha-methyl ester + S-adenosyl-L-homocysteine. Its function is as follows. Catalyzes the methyl esterification of L-isoaspartyl residues in peptides and proteins that result from spontaneous decomposition of normal L-aspartyl and L-asparaginyl residues. It plays a role in the repair and/or degradation of damaged proteins. The polypeptide is Protein-L-isoaspartate O-methyltransferase (Methanothrix thermoacetophila (strain DSM 6194 / JCM 14653 / NBRC 101360 / PT) (Methanosaeta thermophila)).